A 249-amino-acid chain; its full sequence is Diaminopimelate epimerase (249 aa).

Positions 11 and 60 each coordinate substrate. Residue Cys-69 is the Proton donor of the active site. Residues 70–71 (GN), Asn-164, and 182–183 (ER) each bind substrate. Cys-192 (proton acceptor) is an active-site residue. Substrate is bound at residue 193 to 194 (GT).

This sequence belongs to the diaminopimelate epimerase family. In terms of assembly, homodimer.

The protein localises to the cytoplasm. The catalysed reaction is (2S,6S)-2,6-diaminopimelate = meso-2,6-diaminopimelate. The protein operates within amino-acid biosynthesis; L-lysine biosynthesis via DAP pathway; DL-2,6-diaminopimelate from LL-2,6-diaminopimelate: step 1/1. Catalyzes the stereoinversion of LL-2,6-diaminopimelate (L,L-DAP) to meso-diaminopimelate (meso-DAP), a precursor of L-lysine and an essential component of the bacterial peptidoglycan. This Campylobacter jejuni subsp. jejuni serotype O:2 (strain ATCC 700819 / NCTC 11168) protein is Diaminopimelate epimerase.